Reading from the N-terminus, the 461-residue chain is Serine/threonine-protein kinase VHS1 (461 aa).

The 326-residue stretch at 12–337 (YLITSQIGEG…KEVSSITSFT (326 aa)) folds into the Protein kinase domain. ATP contacts are provided by residues 18-26 (IGEGAYGLV) and Lys-41. The active-site Proton acceptor is Asp-185. The segment at 384 to 433 (LSYTSSSEEEDGIKEGIDDDNGSRSGSFGTLDTDTGLHSSFTSTSCESDN) is disordered. Over residues 390-403 (SEEEDGIKEGIDDD) the composition is skewed to acidic residues. Over residues 406–433 (SRSGSFGTLDTDTGLHSSFTSTSCESDN) the composition is skewed to polar residues.

It belongs to the protein kinase superfamily. Ser/Thr protein kinase family.

Its subcellular location is the cytoplasm. It catalyses the reaction L-seryl-[protein] + ATP = O-phospho-L-seryl-[protein] + ADP + H(+). The enzyme catalyses L-threonyl-[protein] + ATP = O-phospho-L-threonyl-[protein] + ADP + H(+). Probable serine/threonine protein kinase involved in the G1-S transition. The protein is Serine/threonine-protein kinase VHS1 (VHS1) of Saccharomyces cerevisiae (strain ATCC 204508 / S288c) (Baker's yeast).